The primary structure comprises 100 residues: uncharacterized protein (100 aa).

The span at 68–91 (EQYASGAGEKRKEQSSGNSRRKDP) shows a compositional bias: basic and acidic residues. Residues 68–100 (EQYASGAGEKRKEQSSGNSRRKDPSLYNWSDVK) are disordered.

This sequence belongs to the chlamydial CPn_0121/CT_031/TC_0300 family.

This is an uncharacterized protein from Chlamydia muridarum (strain MoPn / Nigg).